The sequence spans 269 residues: Protein MGF 360-15R (269 aa).

This sequence belongs to the asfivirus MGF 360 family.

Functionally, plays a role in virus cell tropism, and may be required for efficient virus replication in macrophages. This is Protein MGF 360-15R from African swine fever virus (isolate Pig/Kenya/KEN-50/1950) (ASFV).